The chain runs to 449 residues: NADH-quinone oxidoreductase subunit H (449 aa).

The next 9 helical transmembrane spans lie at 29 to 49 (ILLK…FAIV), 96 to 116 (PIFI…FAVI), 136 to 156 (LPVS…GLIL), 177 to 197 (IISY…YAGT), 211 to 231 (WYIV…GETN), 259 to 279 (FFFL…TTLF), 298 to 318 (WVPL…FIWL), 330 to 350 (FMSF…LAVA), and 365 to 385 (WLVG…IDPG). Residues 393–402 (LEEAEQRKLA) show a composition bias toward basic and acidic residues. The segment at 393–449 (LEEAEQRKLAEAPSLDRIPWPPPPQAAGRGRPAVSAGASANGSSTVIPADPGPRQER) is disordered. The segment covering 418 to 436 (AAGRGRPAVSAGASANGSS) has biased composition (low complexity).

The protein belongs to the complex I subunit 1 family. As to quaternary structure, NDH-1 is composed of 14 different subunits. Subunits NuoA, H, J, K, L, M, N constitute the membrane sector of the complex.

It localises to the cell membrane. The catalysed reaction is a quinone + NADH + 5 H(+)(in) = a quinol + NAD(+) + 4 H(+)(out). In terms of biological role, NDH-1 shuttles electrons from NADH, via FMN and iron-sulfur (Fe-S) centers, to quinones in the respiratory chain. The immediate electron acceptor for the enzyme in this species is believed to be ubiquinone. Couples the redox reaction to proton translocation (for every two electrons transferred, four hydrogen ions are translocated across the cytoplasmic membrane), and thus conserves the redox energy in a proton gradient. This subunit may bind ubiquinone. This is NADH-quinone oxidoreductase subunit H from Frankia casuarinae (strain DSM 45818 / CECT 9043 / HFP020203 / CcI3).